A 258-amino-acid polypeptide reads, in one-letter code: Undecaprenyl-diphosphatase (258 aa).

The next 8 membrane-spanning stretches (helical) occupy residues Ala14–Leu34, Gln39–Phe59, Gly79–Phe99, Val106–Leu126, Val136–Pro156, Ala176–Leu196, Ala209–Met229, and Phe237–Met257.

Belongs to the UppP family.

It is found in the cell membrane. It catalyses the reaction di-trans,octa-cis-undecaprenyl diphosphate + H2O = di-trans,octa-cis-undecaprenyl phosphate + phosphate + H(+). Functionally, catalyzes the dephosphorylation of undecaprenyl diphosphate (UPP). Confers resistance to bacitracin. This chain is Undecaprenyl-diphosphatase, found in Elusimicrobium minutum (strain Pei191).